Here is a 154-residue protein sequence, read N- to C-terminus: uncharacterized protein (154 aa).

The 143-residue stretch at 1–143 (MTESERALLT…LRKLAGSLTK (143 aa)) folds into the HTH marR-type domain. The segment at residues 57–80 (LSKLAMSLDLKPASVTRMTDILYK) is a DNA-binding region (H-T-H motif).

This is an uncharacterized protein from Bacillus subtilis (strain 168).